Reading from the N-terminus, the 180-residue chain is Ribosome maturation factor RimM (180 aa).

In terms of domain architecture, PRC barrel spans 99-179 (NNEYYWKDIV…IVIKNWKQTF (81 aa)).

Belongs to the RimM family. Binds ribosomal protein uS19.

It localises to the cytoplasm. Its function is as follows. An accessory protein needed during the final step in the assembly of 30S ribosomal subunit, possibly for assembly of the head region. Essential for efficient processing of 16S rRNA. May be needed both before and after RbfA during the maturation of 16S rRNA. It has affinity for free ribosomal 30S subunits but not for 70S ribosomes. The protein is Ribosome maturation factor RimM of Buchnera aphidicola subsp. Baizongia pistaciae (strain Bp).